The following is a 596-amino-acid chain: Arginine--tRNA ligase (596 aa).

Residues 123–133 (PNTNKPLHLGH) carry the 'HIGH' region motif.

This sequence belongs to the class-I aminoacyl-tRNA synthetase family. Monomer.

It localises to the cytoplasm. The enzyme catalyses tRNA(Arg) + L-arginine + ATP = L-arginyl-tRNA(Arg) + AMP + diphosphate. This is Arginine--tRNA ligase from Amoebophilus asiaticus (strain 5a2).